The primary structure comprises 427 residues: MESLTLQPIARVEGTVNLPGSKSVSNRALLLAALARGTTVLTNLLDSDDVRHMLNALSALGVQYTLSADRTRCEVTGNGGPLRAAAALELFLGNAGTAMRPLAAALCLGSNDIVLTGEPRMKERPIGHLVDALRQGGAQIDYLEQENYPPLRLRGGFQGGNVEVDGSVSSQFLTALLMTAPLAPQDTVIAIKGDLVSKPYIDITLHLMKTFGVEVDNQSYQRFVVRGKQQYQSPGDYLVEGDASSASYFLAAGAIKGGTVKVTGIGRGSVQGDIRFADVLEKMGATVTWGDDFIACTRGELKAIDMDMNHIPDAAMTIATAALFAQGTTTLRNIYNWRVKETDRLFAMATELRKVGAEVEEGEDYIRITPPAKLKYAEIGTYNDHRMAMCFSLVALSDTPVTILDPKCTAKTFPDYFEQLARISTLA.

3 residues coordinate 3-phosphoshikimate: lysine 22, serine 23, and arginine 27. Position 22 (lysine 22) interacts with phosphoenolpyruvate. 2 residues coordinate phosphoenolpyruvate: glycine 96 and arginine 124. 3-phosphoshikimate is bound by residues serine 169, serine 170, glutamine 171, serine 197, aspartate 313, asparagine 336, and lysine 340. Position 171 (glutamine 171) interacts with phosphoenolpyruvate. Aspartate 313 (proton acceptor) is an active-site residue. The phosphoenolpyruvate site is built by arginine 344, arginine 386, and lysine 411.

It belongs to the EPSP synthase family. As to quaternary structure, monomer.

The protein resides in the cytoplasm. It carries out the reaction 3-phosphoshikimate + phosphoenolpyruvate = 5-O-(1-carboxyvinyl)-3-phosphoshikimate + phosphate. It participates in metabolic intermediate biosynthesis; chorismate biosynthesis; chorismate from D-erythrose 4-phosphate and phosphoenolpyruvate: step 6/7. Catalyzes the transfer of the enolpyruvyl moiety of phosphoenolpyruvate (PEP) to the 5-hydroxyl of shikimate-3-phosphate (S3P) to produce enolpyruvyl shikimate-3-phosphate and inorganic phosphate. This Klebsiella pneumoniae (strain 342) protein is 3-phosphoshikimate 1-carboxyvinyltransferase.